We begin with the raw amino-acid sequence, 155 residues long: Deoxyuridine 5'-triphosphate nucleotidohydrolase (155 aa).

Substrate-binding positions include 74–76, N87, and 91–93; these read RSG and TID.

Belongs to the dUTPase family. It depends on Mg(2+) as a cofactor.

It carries out the reaction dUTP + H2O = dUMP + diphosphate + H(+). It functions in the pathway pyrimidine metabolism; dUMP biosynthesis; dUMP from dCTP (dUTP route): step 2/2. This enzyme is involved in nucleotide metabolism: it produces dUMP, the immediate precursor of thymidine nucleotides and it decreases the intracellular concentration of dUTP so that uracil cannot be incorporated into DNA. The chain is Deoxyuridine 5'-triphosphate nucleotidohydrolase from Cereibacter sphaeroides (strain KD131 / KCTC 12085) (Rhodobacter sphaeroides).